A 394-amino-acid polypeptide reads, in one-letter code: Na(+)/H(+) antiporter NhaA (394 aa).

The next 11 membrane-spanning stretches (helical) occupy residues 11 to 31, 59 to 79, 95 to 115, 125 to 145, 155 to 175, 177 to 197, 203 to 220, 254 to 274, 296 to 316, 328 to 348, and 365 to 385; these read LEAA…IFAN, LLMW…GMEV, IFPA…YWFI, GWAI…ALLS, FLLA…ALFF, HEMS…LVAM, TGLI…ASVL, ALAP…NAGV, LIIG…LLGI, IFAI…IAGL, and LGIL…LKIT.

This sequence belongs to the NhaA Na(+)/H(+) (TC 2.A.33) antiporter family.

It is found in the cell inner membrane. It catalyses the reaction Na(+)(in) + 2 H(+)(out) = Na(+)(out) + 2 H(+)(in). Functionally, na(+)/H(+) antiporter that extrudes sodium in exchange for external protons. This is Na(+)/H(+) antiporter NhaA from Actinobacillus pleuropneumoniae serotype 7 (strain AP76).